We begin with the raw amino-acid sequence, 161 residues long: Cyclic pyranopterin monophosphate synthase (161 aa).

Residues 75 to 77 (LCH) and 113 to 114 (ME) each bind substrate. Aspartate 128 is an active-site residue.

The protein belongs to the MoaC family. As to quaternary structure, homohexamer; trimer of dimers.

The catalysed reaction is (8S)-3',8-cyclo-7,8-dihydroguanosine 5'-triphosphate = cyclic pyranopterin phosphate + diphosphate. It participates in cofactor biosynthesis; molybdopterin biosynthesis. Its function is as follows. Catalyzes the conversion of (8S)-3',8-cyclo-7,8-dihydroguanosine 5'-triphosphate to cyclic pyranopterin monophosphate (cPMP). This is Cyclic pyranopterin monophosphate synthase from Salmonella arizonae (strain ATCC BAA-731 / CDC346-86 / RSK2980).